A 396-amino-acid polypeptide reads, in one-letter code: MATRATQISTLVEEIANNPNLKEDLKILPSNYTFEVPKTIWKIRSTESKYVALQFPEGLIMYACVIADILEKYTGCDTVIMGDVTYGACCVDDYTAKSMGCDLLVHYGHSCLVPIQNTDGIAMLYVFVNIHINLSHLIDCVKENFQGKRLVVVSTVQFIPSLQTLRTTFNKDDSSIRIDIPQCKPLSPGEVLGCTSPRLDASKYDAIVYLGDGRFHLESIMIHNPEIEAFQYDPYSRKLTREFYDHDLMRKNRIGSIEIARKCTTFGLIQGTLGRQGNLKVVEELEAQLERKGKKFLRVLLSEIFPEKLAMFPEVDCWVQVACPRLSIDWGTQFPKPLLYPFELAVALDNISVPSDHWPMDYYSNDSLGPWTNNNEANRPKREKRKPHIVVRTEAS.

3 residues coordinate [4Fe-4S] cluster: C89, C194, and C323. Residues T372–S396 are disordered.

Belongs to the DPH1/DPH2 family. DPH1 subfamily. In terms of assembly, component of the 2-(3-amino-3-carboxypropyl)histidine synthase complex composed of dph-1, dph-2, dph-3 and a NADH-dependent reductase. The cofactor is [4Fe-4S] cluster.

The enzyme catalyses L-histidyl-[translation elongation factor 2] + S-adenosyl-L-methionine = 2-[(3S)-amino-3-carboxypropyl]-L-histidyl-[translation elongation factor 2] + S-methyl-5'-thioadenosine + H(+). It functions in the pathway protein modification; peptidyl-diphthamide biosynthesis. Its function is as follows. Catalyzes the first step of diphthamide biosynthesis, a post-translational modification of histidine which occurs in elongation factor 2. Dph-1 and dph-2 transfer a 3-amino-3-carboxypropyl (ACP) group from S-adenosyl-L-methionine (SAM) to a histidine residue, the reaction is assisted by a reduction system comprising dph-3 and a NADH-dependent reductase. In Caenorhabditis elegans, this protein is 2-(3-amino-3-carboxypropyl)histidine synthase subunit 1 (dph-1).